A 554-amino-acid chain; its full sequence is 7-epi-sesquithujene synthase (554 aa).

Asp-308 and Asp-312 together coordinate Mg(2+). Positions 308, 312, 449, and 452 each coordinate substrate. Residues 308-312 carry the DDXXD motif motif; the sequence is DDMFD. Mg(2+) is bound by residues Asn-452, Ser-456, and Glu-460.

This sequence belongs to the terpene synthase family. As to quaternary structure, monomer. Mg(2+) is required as a cofactor. Requires Mn(2+) as cofactor. In terms of tissue distribution, highly expressed in the husk. Detected in leaf sheaths and leaves.

Its subcellular location is the cytoplasm. The catalysed reaction is (2E,6E)-farnesyl diphosphate = 7-epi-sesquithujene + diphosphate. It catalyses the reaction (2E,6E)-farnesyl diphosphate = (1S,5S,6R)-alpha-bergamotene + diphosphate. The enzyme catalyses (2E,6E)-farnesyl diphosphate = (E)-beta-farnesene + diphosphate. It carries out the reaction (2E,6E)-farnesyl diphosphate = (S)-beta-bisabolene + diphosphate. The catalysed reaction is (2Z,6E)-farnesyl diphosphate = (-)-beta-curcumene + diphosphate. It catalyses the reaction (2E,6E)-farnesyl diphosphate = gamma-curcumene + diphosphate. The enzyme catalyses (2E,6E)-farnesyl diphosphate = sesquisabinene A + diphosphate. Its pathway is secondary metabolite biosynthesis; terpenoid biosynthesis. Functionally, sesquiterpene synthase involved in the production after herbivore attack of a blend of volatiles that attracts natural enemies of herbivores. Converts farnesyl diphosphate to (S)-beta-bisabolene and 7-epi-sesquithujene, along with a mixture of more than 20 other minor sesquiterpene olefins. Can also act in vitro as a monoterpene synthase, converting geranyl diphosphate to (S)-(-)-limonene, beta-myrcene and 11 other monoterpenes. This is 7-epi-sesquithujene synthase from Zea mays (Maize).